The chain runs to 219 residues: Dual specificity phosphatase 29 (219 aa).

Positions 53 to 201 constitute a Tyrosine-protein phosphatase domain; the sequence is HVNEVWPKLY…LRELDRQLVQ (149 aa). 145-152 contacts substrate; that stretch reads HCVMGRSR. Cys-146 functions as the Phosphocysteine intermediate in the catalytic mechanism.

This sequence belongs to the protein-tyrosine phosphatase family. Non-receptor class dual specificity subfamily. As to quaternary structure, homodimer. Interacts with PRKAA2.

The protein resides in the cytoplasm. Its subcellular location is the nucleus. The catalysed reaction is O-phospho-L-tyrosyl-[protein] + H2O = L-tyrosyl-[protein] + phosphate. It carries out the reaction O-phospho-L-seryl-[protein] + H2O = L-seryl-[protein] + phosphate. The enzyme catalyses O-phospho-L-threonyl-[protein] + H2O = L-threonyl-[protein] + phosphate. In terms of biological role, dual specificity phosphatase able to dephosphorylate phosphotyrosine, phosphoserine and phosphothreonine residues within the same substrate, with a preference for phosphotyrosine as a substrate. Involved in the modulation of intracellular signaling cascades. May regulate glucose metabolism by activating, AMPK, an energy sensor protein kinase. Affects MAP kinase signaling though modulation of the ERK1/2 cascade in skeletal muscle promoting muscle cell differentiation, development and atrophy. The chain is Dual specificity phosphatase 29 (DUSP29) from Bos taurus (Bovine).